The following is a 622-amino-acid chain: Calmodulin-binding protein 60 C (622 aa).

The span at 1-19 shows a compositional bias: basic and acidic residues; it reads MQTRYMERTNSMREKRKLE. The disordered stretch occupies residues 1–35; it reads MQTRYMERTNSMREKRKLEEDDNQQQQQQPERKRP. Residues 10–89 are calmodulin-binding; it reads NSMREKRKLE…RLSERSSPKR (80 aa). The DNA-binding stretch occupies residues 159-282; the sequence is EDDDGWSGEE…AFHKKLNKAG (124 aa).

Belongs to the plant ACBP60 protein family. As to quaternary structure, interacts with calmodulin (CaM). Expressed in stems, flowers and root.

It is found in the nucleus. Transcription activator that binds DNA in a sequence-specific manner, likely 5'-GAAATTTTGG-3', to promote the expression of target genes. The protein is Calmodulin-binding protein 60 C of Arabidopsis thaliana (Mouse-ear cress).